The chain runs to 1912 residues: Chromodomain-helicase-DNA-binding protein 4 (1912 aa).

The interval 1–157 (MASGLGSPSP…PKSSAQLLED (157 aa)) is disordered. A compositionally biased stretch (acidic residues) spans 35 to 45 (NEEDPEEDLSE). S44 is modified (phosphoserine). Over residues 113-131 (GKKKKKKLGPKKEKKSKSK) the composition is skewed to basic residues. A Glycyl lysine isopeptide (Lys-Gly) (interchain with G-Cter in SUMO2) cross-link involves residue K133. Positions 135-145 (EEEEEDDDDDS) are enriched in acidic residues. Residues K146, K179, and K297 each participate in a glycyl lysine isopeptide (Lys-Gly) (interchain with G-Cter in SUMO2) cross-link. The segment at 243–360 (ATEVAPPPPP…KKKKGEEEVT (118 aa)) is disordered. The KIKL signature appears at 295–298 (KIKL). S303 bears the Phosphoserine mark. K304 is covalently cross-linked (Glycyl lysine isopeptide (Lys-Gly) (interchain with G-Cter in SUMO2)). Residues S308, S309, S310, and S319 each carry the phosphoserine modification. The segment covering 311 to 323 (EDDDLDVESDFDD) has biased composition (acidic residues). Residues 340 to 353 (SRSRKKLRTTKKKK) are compositionally biased toward basic residues. Phosphothreonine is present on T367. Residues 370 to 417 (QDYCEVCQQGGEIILCDTCPRAYHMVCLDPDMEKAPEGKWSCPHCEKE) form a PHD-type 1 zinc finger. S428 carries the phosphoserine modification. The PHD-type 2 zinc-finger motif lies at 449 to 496 (MEFCRVCKDGGELLCCDTCPSSYHIHCLNPPLPEIPNGEWLCPRCTCP). A Chromo 1 domain is found at 494-594 (TCPALKGKVQ…SGDFGGDEEK (101 aa)). Disordered stretches follow at residues 510–537 (WGQP…PLEG) and 578–603 (NDMD…NKDP). Over residues 513 to 522 (PPSPTPVPRP) the composition is skewed to pro residues. S515 carries the phosphoserine modification. A phosphothreonine mark is found at T517 and T529. The residue at position 531 (S531) is a Phosphoserine. Residues K618 and K696 each participate in a glycyl lysine isopeptide (Lys-Gly) (interchain with G-Cter in SUMO2) cross-link. Residues 622-697 (MMIHRILNHS…KLKKVKLRKL (76 aa)) form the Chromo 2 domain. At T703 the chain carries Phosphothreonine. K711 is covalently cross-linked (Glycyl lysine isopeptide (Lys-Gly) (interchain with G-Cter in SUMO1); alternate). Residue K711 forms a Glycyl lysine isopeptide (Lys-Gly) (interchain with G-Cter in SUMO2); alternate linkage. In terms of domain architecture, Helicase ATP-binding spans 738 to 922 (RFSWAQGTDT…FHLLNFLTPE (185 aa)). Residue 751-758 (DEMGLGKT) coordinates ATP. A DEAH box motif is present at residues 873 to 876 (DEAH). The Helicase C-terminal domain occupies 1054–1203 (LLQKMLKNLK…LTHLVVRPGL (150 aa)). The residue at position 1209 (S1209) is a Phosphoserine. Glycyl lysine isopeptide (Lys-Gly) (interchain with G-Cter in SUMO2) cross-links involve residues K1212, K1228, K1239, and K1304. Phosphoserine occurs at positions 1308, 1349, and 1370. 2 disordered regions span residues 1344-1401 (NYND…KPLP) and 1525-1562 (EENK…PAED). Residues K1528 and K1529 each participate in a glycyl lysine isopeptide (Lys-Gly) (interchain with G-Cter in SUMO2) cross-link. S1531, S1535, and S1537 each carry phosphoserine. Pro residues predominate over residues 1535–1544 (SPSPKTPTPS). Residues T1542, T1549, and T1553 each carry the phosphothreonine modification. K1565 participates in a covalent cross-link: Glycyl lysine isopeptide (Lys-Gly) (interchain with G-Cter in SUMO2). S1570 is subject to Phosphoserine. Basic and acidic residues predominate over residues 1570–1584 (SLKEEESIEGEKEVK). Disordered regions lie at residues 1570-1589 (SLKE…TAPE) and 1594-1644 (CTQA…VEKV). A Glycyl lysine isopeptide (Lys-Gly) (interchain with G-Cter in SUMO2) cross-link involves residue K1572. S1576 carries the phosphoserine modification. The interval 1577–1912 (IEGEKEVKST…PTPQQVAQQQ (336 aa)) is required for interaction with PCNT. A Glycyl lysine isopeptide (Lys-Gly) (interchain with G-Cter in SUMO2) cross-link involves residue K1584. A Phosphoserine modification is found at S1602. The span at 1603–1644 (EDEKVVVEPPEGEEKVEKAEVKERTEEPMETEPKGAADVEKV) shows a compositional bias: basic and acidic residues. Residues K1606, K1617, and K1636 each participate in a glycyl lysine isopeptide (Lys-Gly) (interchain with G-Cter in SUMO2) cross-link. A Glycyl lysine isopeptide (Lys-Gly) (interchain with G-Cter in SUMO2); alternate cross-link involves residue K1643. K1643 carries the post-translational modification N6-acetyllysine; alternate. A Glycyl lysine isopeptide (Lys-Gly) (interchain with G-Cter in SUMO2) cross-link involves residue K1647. The residue at position 1653 (T1653) is a Phosphothreonine. Residues K1660 and K1670 each participate in a glycyl lysine isopeptide (Lys-Gly) (interchain with G-Cter in SUMO2) cross-link. A Phosphothreonine modification is found at T1679. Glycyl lysine isopeptide (Lys-Gly) (interchain with G-Cter in SUMO2) cross-links involve residues K1687 and K1865.

It belongs to the SNF2/RAD54 helicase family. In terms of assembly, component of the nucleosome remodeling and deacetylase (NuRD) repressor complex, composed of core proteins MTA1, MTA2, MTA3, RBBP4, RBBP7, HDAC1, HDAC2, MBD2, MBD3, and peripherally associated proteins CDK2AP1, CDK2AP2, GATAD2A, GATAD2B, CHD3, CHD4 and CHD5. The exact stoichiometry of the NuRD complex is unknown, and some subunits such as MBD2 and MBD3, GATAD2A and GATAD2B, and CHD3, CHD4 and CHD5 define mutually exclusive NuRD complexes. Interacts with IKFZ1; the interaction is direct and when in part of the NuRD complex. Part of a complex containing ATR and HDAC2. Interacts with HDAC2; the interaction is direct. Interacts with the cohesin complex component RAD21; the interaction is direct. Interacts with the ISWI chromatin remodeling complex component SMARCA5; the interaction is direct. Interacts with ZGPAT; the interaction is direct. Interacts with ZMYND8; the interaction is direct, appears to occur with monomeric ZMYND8, and is increased following DNA damage. Interacts with BCL6. Interacts with BRD4. Interacts with CBX1. Interacts with CBX3. Interacts with CBX5. Interacts with GATAD2A. Interacts with HDAC1. Interacts with KLF1; the interaction depends on sumoylation of KLF1, and leads to its transcriptional repression. Interacts with MTA1. Interacts with PCNT. Interacts with RBBP7. Interacts with SETX. Interacts with TRIM27. Interacts with histone H3. Interacts with histone H4. Does not interact with PWWP2A. Does not interact with PWWP2B. Interacts (via KIKL motif) with BRD3 (via NET domain). Requires Zn(2+) as cofactor. As to expression, widely expressed.

The protein resides in the nucleus. It is found in the cytoplasm. It localises to the cytoskeleton. Its subcellular location is the microtubule organizing center. The protein localises to the centrosome. The catalysed reaction is ATP + H2O = ADP + phosphate + H(+). In terms of biological role, ATP-dependent chromatin-remodeling factor that binds and distorts nucleosomal DNA. Acts as a component of the histone deacetylase NuRD complex which participates in the remodeling of chromatin. Localizes to acetylated damaged chromatin in a ZMYND8-dependent manner, to promote transcriptional repression and double-strand break repair by homologous recombination. Involved in neurogenesis. The chain is Chromodomain-helicase-DNA-binding protein 4 (CHD4) from Homo sapiens (Human).